The following is a 254-amino-acid chain: 3-deoxy-manno-octulosonate cytidylyltransferase (254 aa).

The protein belongs to the KdsB family.

It is found in the cytoplasm. The catalysed reaction is 3-deoxy-alpha-D-manno-oct-2-ulosonate + CTP = CMP-3-deoxy-beta-D-manno-octulosonate + diphosphate. The protein operates within nucleotide-sugar biosynthesis; CMP-3-deoxy-D-manno-octulosonate biosynthesis; CMP-3-deoxy-D-manno-octulosonate from 3-deoxy-D-manno-octulosonate and CTP: step 1/1. It participates in bacterial outer membrane biogenesis; lipopolysaccharide biosynthesis. Activates KDO (a required 8-carbon sugar) for incorporation into bacterial lipopolysaccharide in Gram-negative bacteria. This Pseudomonas aeruginosa (strain UCBPP-PA14) protein is 3-deoxy-manno-octulosonate cytidylyltransferase.